Here is an 871-residue protein sequence, read N- to C-terminus: DNA mismatch repair protein MutS (871 aa).

Residue glycine 605–serine 612 coordinates ATP. Residues proline 791–serine 840 form a disordered region. The segment covering glutamate 827–serine 840 has biased composition (basic and acidic residues).

The protein belongs to the DNA mismatch repair MutS family.

This protein is involved in the repair of mismatches in DNA. It is possible that it carries out the mismatch recognition step. This protein has a weak ATPase activity. The chain is DNA mismatch repair protein MutS from Shouchella clausii (strain KSM-K16) (Alkalihalobacillus clausii).